The primary structure comprises 457 residues: UPF0210 protein Sfum_2948 (457 aa).

The protein belongs to the UPF0210 family. Homodimer.

This Syntrophobacter fumaroxidans (strain DSM 10017 / MPOB) protein is UPF0210 protein Sfum_2948.